The sequence spans 1554 residues: Lysine-specific demethylase 5C (1554 aa).

A JmjN domain is found at 14 to 55 (CPVFEPSWAEFRDPLGYIAKIRPIAEKSGICKIRPPADWQPP). In terms of domain architecture, ARID spans 79–169 (TRVKLNYLDQ…IVYPYEMYQS (91 aa)). Residues 197-207 (LRQSVQPSKFN) show a composition bias toward polar residues. A disordered region spans residues 197–227 (LRQSVQPSKFNSYGRRAKRLQPDPEPTEEDI). Glycyl lysine isopeptide (Lys-Gly) (interchain with G-Cter in SUMO2) cross-links involve residues lysine 205, lysine 229, lysine 244, and lysine 274. Residues 284 to 303 (ESTSPKTFLEGKEELSHSPE) form a disordered region. Serine 287 carries the phosphoserine modification. Residue lysine 295 forms a Glycyl lysine isopeptide (Lys-Gly) (interchain with G-Cter in SUMO2) linkage. Phosphoserine is present on residues serine 301 and serine 317. The PHD-type 1 zinc finger occupies 326 to 372 (VCRMCSRGDEDDKLLLCDGCDDNYHIFCLLPPLPEIPKGVWRCPKCV). The 167-residue stretch at 468-634 (EYATSGWNLN…AGRQCIEHYR (167 aa)) folds into the JmjC domain. Fe cation contacts are provided by histidine 514, aspartate 517, and histidine 602. Serine 893 and serine 897 each carry phosphoserine. Residue lysine 1127 forms a Glycyl lysine isopeptide (Lys-Gly) (interchain with G-Cter in SUMO2) linkage. The PHD-type 2 zinc-finger motif lies at 1187 to 1248 (ICVCGQVPAG…DTKFLCPLCM (62 aa)). 2 disordered regions span residues 1319 to 1364 (SKPE…EGSG) and 1437 to 1535 (AERH…APFS). At serine 1353 the chain carries Phosphoserine. Basic residues predominate over residues 1442–1457 (SRTRGRALERRRRRKV). Residues 1458–1475 (DRGGEPDDPAREELEPKR) are compositionally biased toward basic and acidic residues. A compositionally biased stretch (acidic residues) spans 1482 to 1497 (EAEEVQEEEELEEETG).

Belongs to the JARID1 histone demethylase family. Part of two distinct complexes, one containing E2F6, and the other containing REST. Interacts with ZMYND8. Fe(2+) is required as a cofactor.

The protein resides in the nucleus. It carries out the reaction N(6),N(6),N(6)-trimethyl-L-lysyl(4)-[histone H3] + 3 2-oxoglutarate + 3 O2 = L-lysyl(4)-[histone H3] + 3 formaldehyde + 3 succinate + 3 CO2. Its function is as follows. Histone demethylase that specifically demethylates 'Lys-4' of histone H3, thereby playing a central role in histone code. Does not demethylate histone H3 'Lys-9', H3 'Lys-27', H3 'Lys-36', H3 'Lys-79' or H4 'Lys-20'. Demethylates trimethylated and dimethylated but not monomethylated H3 'Lys-4'. Participates in transcriptional repression of neuronal genes by recruiting histone deacetylases and REST at neuron-restrictive silencer elements. Represses the CLOCK-BMAL1 heterodimer-mediated transcriptional activation of the core clock component PER2. This Mus musculus (Mouse) protein is Lysine-specific demethylase 5C (Kdm5c).